Reading from the N-terminus, the 290-residue chain is 4-hydroxy-tetrahydrodipicolinate synthase (290 aa).

Thr-44 provides a ligand contact to pyruvate. Residue Tyr-132 is the Proton donor/acceptor of the active site. Lys-160 acts as the Schiff-base intermediate with substrate in catalysis. Ile-202 is a binding site for pyruvate.

Belongs to the DapA family. Homotetramer; dimer of dimers.

It is found in the cytoplasm. It catalyses the reaction L-aspartate 4-semialdehyde + pyruvate = (2S,4S)-4-hydroxy-2,3,4,5-tetrahydrodipicolinate + H2O + H(+). It functions in the pathway amino-acid biosynthesis; L-lysine biosynthesis via DAP pathway; (S)-tetrahydrodipicolinate from L-aspartate: step 3/4. In terms of biological role, catalyzes the condensation of (S)-aspartate-beta-semialdehyde [(S)-ASA] and pyruvate to 4-hydroxy-tetrahydrodipicolinate (HTPA). This is 4-hydroxy-tetrahydrodipicolinate synthase from Geotalea daltonii (strain DSM 22248 / JCM 15807 / FRC-32) (Geobacter daltonii).